A 908-amino-acid polypeptide reads, in one-letter code: Adhesion G-protein coupled receptor F1 (908 aa).

An N-terminal signal peptide occupies residues 1 to 20 (MRIGLLWLVPLFTLTEGTDG). The Extracellular portion of the chain corresponds to 21–588 (FLQQKNDGRR…VVPVVKWITY (568 aa)). 12 N-linked (GlcNAc...) asparagine glycosylation sites follow: N133, N167, N328, N353, N367, N388, N422, N453, N510, N519, N526, and N551. Residues 147-255 (ERAKVWGTFE…GSFRVFGKAP (109 aa)) enclose the SEA domain. The 144-residue stretch at 434-577 (PVTQIQSTRG…SMLMSPFVPS (144 aa)) folds into the GAIN-B domain. Intrachain disulfides connect C532/C559 and C547/C561. The interval 532–577 (CVFWDFSQLQWSNAGCQLVNETLDTVLCRCSHLTSFSMLMSPFVPS) is GPS. The segment at 566–574 (SFSMLMSPF) is stachel. The helical transmembrane segment at 589–609 (IGLSISIASLILCLIIESLFW) threads the bilayer. At 610 to 622 (KQTKRSQTSYTRN) the chain is on the cytoplasmic side. The chain crosses the membrane as a helical span at residues 623–643 (ICLVNIAVSLLIADVWFIIAA). Residues 644-658 (TVDPSVSPSGVCVAA) lie on the Extracellular side of the membrane. Residues C655 and C731 are joined by a disulfide bond. Residues 659–679 (VFFTHFFYLAVFFWMLVLGIL) traverse the membrane as a helical segment. The Cytoplasmic segment spans residues 680–697 (LAYRIILVFHHMALTTMM). A helical membrane pass occupies residues 698-718 (AIGFCLGYGCPLLISIITLAV). Over 719–742 (TQPSNSYKRNDVCWLNWSDKSKPL) the chain is Extracellular. Residue N734 is glycosylated (N-linked (GlcNAc...) asparagine). A helical transmembrane segment spans residues 743-763 (LAFVVPALTIVAVNLVVVLLV). Over 764 to 789 (LRKLWRPAVGERLNQDDKATAIRMGK) the chain is Cytoplasmic. Residues 790–810 (SLLVLTPLLGLTWGFGIGTMA) traverse the membrane as a helical segment. At 811-818 (NSHNLAWH) the chain is on the extracellular side. A helical membrane pass occupies residues 819 to 839 (VLFALLNAFQGFFIFCFGILL). Over 840–908 (DTKLRQLLSN…ITLTQFLSTE (69 aa)) the chain is Cytoplasmic.

Belongs to the G-protein coupled receptor 2 family. Adhesion G-protein coupled receptor (ADGR) subfamily. In terms of assembly, heterodimer of 2 chains generated by proteolytic processing; the large extracellular N-terminal fragment and the membrane-bound C-terminal fragment predominantly remain associated and non-covalently linked. Autoproteolytically processed at the GPS region of the GAIN-B domain; this cleavage modulates receptor activity. As to expression, expressed in liver, kidney and adrenal gland. In kidney strong expression in the renal pelvis and the ureter.

The protein localises to the cell membrane. Forms a heterodimer of 2 chains generated by proteolytic processing that remain associated through non-covalent interactions mediated by the GAIN-B domain. In the inactivated receptor, the Stachel sequence (also named stalk) is embedded in the GAIN-B domain, where it adopts a beta-strand conformation. On activation, the Stachel moves into the 7 transmembrane region and adopts a twisted hook-shaped configuration that forms contacts within the receptor, leading to coupling of a G-alpha protein, which activates signaling. The cleaved GAIN-B and N-terminal domains can then dissociate from the rest of the receptor. In terms of biological role, adhesion G-protein coupled receptor (aGPCR) for N-docosahexaenoylethanolamine (synaptamide), an omega-3 fatty acid lipid highly enriched in the brain. Ligand binding causes a conformation change that triggers signaling via guanine nucleotide-binding proteins (G proteins) and modulates the activity of downstream effectors, such as adenylate cyclase. ADGRF1 is coupled to G(s) G proteins and mediates activation of adenylate cyclase activity. Also able to couple to G(q), G(i) and G(12)/G(13) G proteins; additional evidence is however required to confirm this result in vivo. Involved in the development of neurons and cognitive function. In liver, involved in fat accumulation. The protein is Adhesion G-protein coupled receptor F1 of Mus musculus (Mouse).